A 117-amino-acid polypeptide reads, in one-letter code: Large ribosomal subunit protein bL20 (117 aa).

Belongs to the bacterial ribosomal protein bL20 family.

Functionally, binds directly to 23S ribosomal RNA and is necessary for the in vitro assembly process of the 50S ribosomal subunit. It is not involved in the protein synthesizing functions of that subunit. This chain is Large ribosomal subunit protein bL20, found in Vibrio cholerae serotype O1 (strain ATCC 39541 / Classical Ogawa 395 / O395).